The following is a 405-amino-acid chain: 4-hydroxy-3-methylbut-2-enyl diphosphate reductase (405 aa).

C66 serves as a coordination point for [4Fe-4S] cluster. A (2E)-4-hydroxy-3-methylbut-2-enyl diphosphate-binding site is contributed by H96. H96 is a binding site for dimethylallyl diphosphate. H96 is an isopentenyl diphosphate binding site. Position 157 (C157) interacts with [4Fe-4S] cluster. A (2E)-4-hydroxy-3-methylbut-2-enyl diphosphate-binding site is contributed by H185. Residue H185 participates in dimethylallyl diphosphate binding. An isopentenyl diphosphate-binding site is contributed by H185. The active-site Proton donor is the E187. T250 serves as a coordination point for (2E)-4-hydroxy-3-methylbut-2-enyl diphosphate. Residue C288 coordinates [4Fe-4S] cluster. Positions 317, 318, 319, and 380 each coordinate (2E)-4-hydroxy-3-methylbut-2-enyl diphosphate. Dimethylallyl diphosphate is bound by residues S317, S318, N319, and S380. Isopentenyl diphosphate-binding residues include S317, S318, N319, and S380.

It belongs to the IspH family. Requires [4Fe-4S] cluster as cofactor.

The catalysed reaction is isopentenyl diphosphate + 2 oxidized [2Fe-2S]-[ferredoxin] + H2O = (2E)-4-hydroxy-3-methylbut-2-enyl diphosphate + 2 reduced [2Fe-2S]-[ferredoxin] + 2 H(+). It carries out the reaction dimethylallyl diphosphate + 2 oxidized [2Fe-2S]-[ferredoxin] + H2O = (2E)-4-hydroxy-3-methylbut-2-enyl diphosphate + 2 reduced [2Fe-2S]-[ferredoxin] + 2 H(+). It participates in isoprenoid biosynthesis; dimethylallyl diphosphate biosynthesis; dimethylallyl diphosphate from (2E)-4-hydroxy-3-methylbutenyl diphosphate: step 1/1. The protein operates within isoprenoid biosynthesis; isopentenyl diphosphate biosynthesis via DXP pathway; isopentenyl diphosphate from 1-deoxy-D-xylulose 5-phosphate: step 6/6. Functionally, catalyzes the conversion of 1-hydroxy-2-methyl-2-(E)-butenyl 4-diphosphate (HMBPP) into a mixture of isopentenyl diphosphate (IPP) and dimethylallyl diphosphate (DMAPP). Acts in the terminal step of the DOXP/MEP pathway for isoprenoid precursor biosynthesis. This chain is 4-hydroxy-3-methylbut-2-enyl diphosphate reductase, found in Prochlorococcus marinus (strain SARG / CCMP1375 / SS120).